The following is an 841-amino-acid chain: Axin-1 (841 aa).

The interval 1 to 78 is disordered; that stretch reads MNIQGKGFPL…GYEPEGSASP (78 aa). The segment covering 44–61 has biased composition (polar residues); sequence FYSSKSDAVRNETSTATP. Residues 88-211 form the RGS domain; sequence SLHSLLDDQD…LKSDIYLEYT (124 aa). Residues 217–269 form a disordered region; that stretch reads SPKIYSDPSSGSGTGKGLPGYLPTLNEDEEWKCDQDTEPEASRDSAPSSRLTQ. Over residues 248–259 the composition is skewed to basic and acidic residues; that stretch reads KCDQDTEPEASR. The interaction with GSK3B stretch occupies residues 348–433; sequence LRKQHRREMQ…DADISSGPSV (86 aa). Residues 434–508 are interaction with beta-catenin; that stretch reads ISHKMPSAQP…RSPESGHLGK (75 aa). 3 disordered regions span residues 482–527, 613–635, and 727–756; these read KTPG…TTKS, NIKK…SPED, and RRLE…SGAS. Residues 727–736 are compositionally biased toward basic and acidic residues; the sequence is RRLEEEEKRA. A DIX domain is found at 759 to 841; the sequence is CENIVVAYYF…KIIGKVEKID (83 aa).

Homodimer. ADP-ribosylated by tankyrase TNKS and TNKS2. Poly-ADP-ribosylated protein is recognized by RNF146, followed by ubiquitination at 'Lys-48' and subsequent activation of the Wnt signaling pathway. In terms of processing, ubiquitinated by RNF146 when poly-ADP-ribosylated, leading to its degradation and subsequent activation of the Wnt signaling pathway.

Its subcellular location is the cytoplasm. The protein localises to the nucleus. It is found in the membrane. It localises to the cell membrane. Its function is as follows. Component of the beta-catenin destruction complex required for regulating CTNNB1 levels through phosphorylation and ubiquitination, and modulating Wnt-signaling. Controls dorsoventral patterning via two opposing effects; down-regulates CTNNB1 to inhibit the Wnt signaling pathway and ventralize embryos, but also dorsalizes embryos by activating a Wnt-independent JNK signaling pathway. The polypeptide is Axin-1 (AXIN1) (Gallus gallus (Chicken)).